The following is a 338-amino-acid chain: Glycerol-3-phosphate dehydrogenase [NAD(P)+] (338 aa).

NADPH is bound by residues Ser11, Trp12, His32, Arg33, and Lys106. 3 residues coordinate sn-glycerol 3-phosphate: Lys106, Gly137, and Ser139. Ala141 contacts NADPH. Lys192, Asp245, Ser255, Arg256, and Asn257 together coordinate sn-glycerol 3-phosphate. Lys192 functions as the Proton acceptor in the catalytic mechanism. Arg256 contacts NADPH. NADPH contacts are provided by Val280 and Glu282.

The protein belongs to the NAD-dependent glycerol-3-phosphate dehydrogenase family.

It localises to the cytoplasm. The enzyme catalyses sn-glycerol 3-phosphate + NAD(+) = dihydroxyacetone phosphate + NADH + H(+). It carries out the reaction sn-glycerol 3-phosphate + NADP(+) = dihydroxyacetone phosphate + NADPH + H(+). It functions in the pathway membrane lipid metabolism; glycerophospholipid metabolism. Its function is as follows. Catalyzes the reduction of the glycolytic intermediate dihydroxyacetone phosphate (DHAP) to sn-glycerol 3-phosphate (G3P), the key precursor for phospholipid synthesis. The protein is Glycerol-3-phosphate dehydrogenase [NAD(P)+] of Lysinibacillus sphaericus (strain C3-41).